A 196-amino-acid chain; its full sequence is Peroxynitrite isomerase (196 aa).

Residues 1-29 (MSDENPLQPPWLNAPPVDPYPYEESHDLR) are disordered. The span at 7 to 19 (LQPPWLNAPPVDP) shows a compositional bias: pro residues. The GXWXGXG signature appears at 46-52 (GVWRGRG). Heme b is bound at residue H186.

The protein belongs to the nitrobindin family. Homodimer. Heme b is required as a cofactor.

It catalyses the reaction peroxynitrite = nitrate. It participates in nitrogen metabolism. In terms of biological role, heme-binding protein able to scavenge peroxynitrite and to protect free L-tyrosine against peroxynitrite-mediated nitration, by acting as a peroxynitrite isomerase that converts peroxynitrite to nitrate. Therefore, this protein likely plays a role in peroxynitrite sensing and in the detoxification of reactive nitrogen and oxygen species (RNS and ROS, respectively). Is able to bind nitric oxide (NO) in vitro, but may act as a sensor of peroxynitrite levels in vivo. The polypeptide is Peroxynitrite isomerase (Salinispora arenicola (strain CNS-205)).